The chain runs to 609 residues: Interleukin-1 receptor-associated kinase 3 (609 aa).

One can recognise a Death domain in the interval 41–106; sequence WRGLAERLSN…RAIHLIINYG (66 aa). The residue at position 110 (threonine 110) is a Phosphothreonine. In terms of domain architecture, Protein kinase spans 178–463; it reads FHKDFLIGEG…SSLESTQPSL (286 aa). ATP-binding positions include 184–192, lysine 205, 308–311, and aspartate 324; these read IGEGEIFEV and SSAN. Phosphoserine is present on serine 480.

It belongs to the protein kinase superfamily. TKL Ser/Thr protein kinase family. Pelle subfamily. Monomer. Homodimer. May interact with IRAK4 (when phosphorylated). Interacts (when phosphorylated at Thr-110) with PIN1 (via WW domain) in response to IL33-mediated (but not TLR4 ligand LPS) dendritic cell stimulation. As to expression, expressed in inflamed lung macrophages (at protein level). Expressed in dendritic cells (at protein level). Highly expressed in liver and thymus and at lower levels in heart, brain, spleen and kidney.

Its subcellular location is the cytoplasm. It localises to the nucleus. Functionally, putative inactive protein kinase which regulates signaling downstream of immune receptors including IL1R and Toll-like receptors. Inhibits dissociation of IRAK1 and IRAK4 from the Toll-like receptor signaling complex by either inhibiting the phosphorylation of IRAK1 and IRAK4 or stabilizing the receptor complex. Upon IL33-induced lung inflammation, positively regulates expression of IL6, CSF3, CXCL2 and CCL5 mRNAs in dendritic cells. The sequence is that of Interleukin-1 receptor-associated kinase 3 from Mus musculus (Mouse).